The primary structure comprises 159 residues: SsrA-binding protein (159 aa).

The disordered stretch occupies residues 134–159; the sequence is KEHDKRDTERDRDWSRDKERLMKHNA.

Belongs to the SmpB family.

It is found in the cytoplasm. Required for rescue of stalled ribosomes mediated by trans-translation. Binds to transfer-messenger RNA (tmRNA), required for stable association of tmRNA with ribosomes. tmRNA and SmpB together mimic tRNA shape, replacing the anticodon stem-loop with SmpB. tmRNA is encoded by the ssrA gene; the 2 termini fold to resemble tRNA(Ala) and it encodes a 'tag peptide', a short internal open reading frame. During trans-translation Ala-aminoacylated tmRNA acts like a tRNA, entering the A-site of stalled ribosomes, displacing the stalled mRNA. The ribosome then switches to translate the ORF on the tmRNA; the nascent peptide is terminated with the 'tag peptide' encoded by the tmRNA and targeted for degradation. The ribosome is freed to recommence translation, which seems to be the essential function of trans-translation. In Marinomonas sp. (strain MWYL1), this protein is SsrA-binding protein.